Reading from the N-terminus, the 480-residue chain is Glutamate--tRNA ligase (480 aa).

The 'HIGH' region motif lies at 12 to 22; it reads PSPTGAPHLGL. The 'KMSKS' region signature appears at 255-259; the sequence is KLSKR. An ATP-binding site is contributed by Lys-258.

Belongs to the class-I aminoacyl-tRNA synthetase family. Glutamate--tRNA ligase type 1 subfamily. In terms of assembly, monomer.

It is found in the cytoplasm. It carries out the reaction tRNA(Glu) + L-glutamate + ATP = L-glutamyl-tRNA(Glu) + AMP + diphosphate. Its function is as follows. Catalyzes the attachment of glutamate to tRNA(Glu) in a two-step reaction: glutamate is first activated by ATP to form Glu-AMP and then transferred to the acceptor end of tRNA(Glu). The sequence is that of Glutamate--tRNA ligase from Tropheryma whipplei (strain TW08/27) (Whipple's bacillus).